The sequence spans 175 residues: Albumin-1 (175 aa).

Cys135 and Cys141 are joined by a disulfide.

Belongs to the protease inhibitor I3 (leguminous Kunitz-type inhibitor) family.

Its function is as follows. 2S seed storage protein. The chain is Albumin-1 from Psophocarpus tetragonolobus (Winged bean).